Reading from the N-terminus, the 295-residue chain is G1/S-specific cyclin-D1 (295 aa).

Positions 28 to 152 constitute a Cyclin N-terminal domain; that stretch reads LRAMLKTEET…LLVNKLKWNL (125 aa). Residue Lys269 forms a Glycyl lysine isopeptide (Lys-Gly) (interchain with G-Cter in ubiquitin) linkage. Positions 269 to 295 are disordered; sequence KATEEEGEVEEEAGLACTPTDVRDVDI. Thr286 carries the phosphothreonine modification.

This sequence belongs to the cyclin family. Cyclin D subfamily. In terms of assembly, interacts with either CDK4 or CDK6 protein kinase to form a serine/threonine kinase holoenzyme complex. The cyclin subunit imparts substrate specificity to the complex. Component of the ternary complex CCND1/CDK4/CDKN1B required for nuclear translocation and modulation of CDK4-mediated kinase activity. Interacts directly with CDKN1B. Can form similar complexes with either CDKN1A or CDKN2A. Interacts with UHRF2; the interaction ubiquitinates CCND1 and appears to occur independently of phosphorylation. Interacts with USP2. Interacts (via cyclin N-terminal domain) with INSM1 (via N-terminal region); the interaction competes with the binding of CCND1 to CDK4 during cell cycle progression and inhibits CDK4 activity. Interacts with CDK4; the interaction is prevented with the binding of CCND1 to INSM1 during cell cycle progression. In terms of processing, phosphorylation at Thr-286 by MAP kinases is required for ubiquitination and degradation by the DCX(AMBRA1) complex. It also plays an essential role for recognition by the FBXO31 component of SCF (SKP1-cullin-F-box) protein ligase complex following DNA damage. Post-translationally, ubiquitinated at Lys-269 by the DCX(AMBRA1) complex during the transition from G1 to S cell phase, leading to its degradation: ubiquitination is dependent on Thr-286 phosphorylation. The DCX(AMBRA1) complex represents the major regulator of CCND1 stability during the G1/S transition. Also ubiquitinated by the SCF(FBXO4) and Cul7-RING(FBXW8) ubiquitin-protein ligase complexes. Following DNA damage it is ubiquitinated by the SCF(FBXO31) protein ligase complex. SCF(FBXO31) ubiquitination is dependent on Thr-286 phosphorylation. Ubiquitinated also by UHRF2 apparently in a phosphorylation-independent manner. Ubiquitination leads to its degradation and G1 arrest. Deubiquitinated by USP2; leading to its stabilization.

The protein localises to the nucleus. It is found in the cytoplasm. Its subcellular location is the nucleus membrane. In terms of biological role, regulatory component of the cyclin D1-CDK4 (DC) complex that phosphorylates and inhibits members of the retinoblastoma (RB) protein family including RB1 and regulates the cell-cycle during G(1)/S transition. Phosphorylation of RB1 allows dissociation of the transcription factor E2F from the RB/E2F complex and the subsequent transcription of E2F target genes which are responsible for the progression through the G(1) phase. Hypophosphorylates RB1 in early G(1) phase. Cyclin D-CDK4 complexes are major integrators of various mitogenenic and antimitogenic signals. Also a substrate for SMAD3, phosphorylating SMAD3 in a cell-cycle-dependent manner and repressing its transcriptional activity. Component of the ternary complex, cyclin D1/CDK4/CDKN1B, required for nuclear translocation and activity of the cyclin D-CDK4 complex. Exhibits transcriptional corepressor activity with INSM1 on the NEUROD1 and INS promoters in a cell cycle-independent manner. This Rattus norvegicus (Rat) protein is G1/S-specific cyclin-D1 (Ccnd1).